We begin with the raw amino-acid sequence, 91 residues long: Small ribosomal subunit protein uS19 (91 aa).

The protein belongs to the universal ribosomal protein uS19 family.

Its function is as follows. Protein S19 forms a complex with S13 that binds strongly to the 16S ribosomal RNA. This is Small ribosomal subunit protein uS19 from Cupriavidus taiwanensis (strain DSM 17343 / BCRC 17206 / CCUG 44338 / CIP 107171 / LMG 19424 / R1) (Ralstonia taiwanensis (strain LMG 19424)).